The chain runs to 275 residues: Phosphonoacetaldehyde hydrolase (275 aa).

The active-site Nucleophile is Asp-15. Mg(2+) contacts are provided by Asp-15 and Ala-17. Residue Lys-56 is the Schiff-base intermediate with substrate of the active site. Asp-189 lines the Mg(2+) pocket.

The protein belongs to the HAD-like hydrolase superfamily. PhnX family. Homodimer. Requires Mg(2+) as cofactor.

It catalyses the reaction phosphonoacetaldehyde + H2O = acetaldehyde + phosphate + H(+). Functionally, involved in phosphonate degradation. The polypeptide is Phosphonoacetaldehyde hydrolase (Pseudomonas putida (strain ATCC 700007 / DSM 6899 / JCM 31910 / BCRC 17059 / LMG 24140 / F1)).